We begin with the raw amino-acid sequence, 907 residues long: Protein translocase subunit SecA (907 aa).

ATP-binding positions include glutamine 87, 105–109, and aspartate 512; that span reads GEGKT. A disordered region spans residues 870-897; sequence AALAATQPQVREGEKVGRNDPCPCGSGK. Residues cysteine 891, cysteine 893, cysteine 902, and histidine 903 each contribute to the Zn(2+) site.

The protein belongs to the SecA family. Monomer and homodimer. Part of the essential Sec protein translocation apparatus which comprises SecA, SecYEG and auxiliary proteins SecDF-YajC and YidC. Requires Zn(2+) as cofactor.

The protein resides in the cell inner membrane. It is found in the cytoplasm. It catalyses the reaction ATP + H2O + cellular proteinSide 1 = ADP + phosphate + cellular proteinSide 2.. In terms of biological role, part of the Sec protein translocase complex. Interacts with the SecYEG preprotein conducting channel. Has a central role in coupling the hydrolysis of ATP to the transfer of proteins into and across the cell membrane, serving both as a receptor for the preprotein-SecB complex and as an ATP-driven molecular motor driving the stepwise translocation of polypeptide chains across the membrane. This is Protein translocase subunit SecA from Shewanella piezotolerans (strain WP3 / JCM 13877).